Here is a 434-residue protein sequence, read N- to C-terminus: Probable G-protein coupled receptor B0563.6 (434 aa).

An N-linked (GlcNAc...) asparagine glycan is attached at Asn12. 2 helical membrane passes run 30–50 (VLPCICAIGIVGNITNLMVLA) and 65–85 (LAVADLLCMLFVLVFVSTEYL). The N-linked (GlcNAc...) asparagine glycan is linked to Asn88. Transmembrane regions (helical) follow at residues 105-125 (LMLTLINWALGAGVYVVVALS) and 147-167 (ATRAIVIAFLIPAIFYVPYAI). Asn181 is a glycosylation site (N-linked (GlcNAc...) asparagine). Helical transmembrane passes span 208–228 (ILRFLPIIILTVLNIQIMIAF) and 258–278 (GGTVLMSLVCNIPAAINLLLI). Asn429 and Asn430 each carry an N-linked (GlcNAc...) asparagine glycan.

The protein belongs to the G-protein coupled receptor 1 family.

The protein resides in the cell membrane. Functionally, not known. Putative receptor. In Caenorhabditis elegans, this protein is Probable G-protein coupled receptor B0563.6.